The chain runs to 160 residues: Protein cornichon homolog 3 (160 aa).

Over 1-10 (MAFTFAAFCY) the chain is Cytoplasmic. A helical transmembrane segment spans residues 11–31 (MLSLVLCAALIFFAIWHIIAF). Residues 32 to 72 (DELRTDFKSPIDQCNPVHARERLRNIERICFLLRKLVLPEY) are Lumenal-facing. The chain crosses the membrane as a helical span at residues 73 to 93 (SIHSLFCVMFLCAQEWLTLGL). Topologically, residues 94–138 (NVPLLFYHFWRYFHCPADSSELAYDPPVVMNADTLSYCQKEAWCK) are cytoplasmic. The helical transmembrane segment at 139 to 159 (LAFYLLSFFYYLYCMIYTLVS) threads the bilayer. S160 is a topological domain (lumenal).

This sequence belongs to the cornichon family. As to quaternary structure, acts as an auxiliary subunit for AMPA-selective glutamate receptors (AMPARs). Found in a complex with GRIA1, GRIA2, GRIA3, GRIA4, CNIH2, CACNG2, CACNG3, CACNG4, CACNG5, CACNG7 and CACNG8. Brain. Expressed in the neocortex, hippocampal formation, and cerebellum (at protein level).

It is found in the postsynaptic cell membrane. In terms of biological role, regulates the trafficking and gating properties of AMPA-selective glutamate receptors (AMPARs). Promotes their targeting to the cell membrane and synapses and modulates their gating properties by regulating their rates of activation, deactivation and desensitization. The sequence is that of Protein cornichon homolog 3 (Cnih3) from Rattus norvegicus (Rat).